Here is a 278-residue protein sequence, read N- to C-terminus: Sulfur carrier protein FdhD (278 aa).

The active-site Cysteine persulfide intermediate is the C120.

Belongs to the FdhD family.

It localises to the cytoplasm. Its function is as follows. Required for formate dehydrogenase (FDH) activity. Acts as a sulfur carrier protein that transfers sulfur from IscS to the molybdenum cofactor prior to its insertion into FDH. The polypeptide is Sulfur carrier protein FdhD (Bordetella petrii (strain ATCC BAA-461 / DSM 12804 / CCUG 43448)).